Consider the following 599-residue polypeptide: MSAASANSVTNPSAWENSEIHPKHSYSPIVSGDLEVPETEIQLDDSPTGPNDPVRIYRTRGPECDPTVGLKPLRAQWIDSREDTEEYAGRERNLADDGRSAQRRGAASLEWKGVKPTPRRAKQGKRVTQMHYARQGIITKEMEFVALREHMDPEFVRSEIARGRAIIPNNINHPESEPMIIGRKFLTKINANIGNSAVTSSIEEEVSKLRWATRWGADTVMDLSTGDDIHTTREWIIRNSPVPIGTVPIYQALEKVNGVAEDLTWEIFRDTVIEQCEQGVDYMTIHAGVLLAYIPLTTKRITGIVSRGGSIMAGWCLAHHKESFLYEHFDELCEIFAQYDVAFSLGDGLRPGSVADANDAAQFAELKTIGELARRAWEYDVQVMIEGPGHVPLNMVQENNELEQKWAHDAPFYTLGPLVTDIAPGYDHITSAIGAAHIAMGGTAMLCYVTPKEHLGLPNRDDVKTGVITYKLAAHAADVAKGHPGARAWDDAMSKARFEFRWHDQFALSLDPDTAIAYHDETLPAEPAKTAHFCSMCGPKFCSMRISQDIRDMFADKIADLGIPQVGGDAEAGMAAKSEEFVAQGSQLYSEVRDNAAHA.

Polar residues predominate over residues 1–16; the sequence is MSAASANSVTNPSAWE. 2 disordered regions span residues 1–53 and 82–108; these read MSAA…PNDP and EDTE…GAAS. The segment covering 87–100 has biased composition (basic and acidic residues); it reads YAGRERNLADDGRS. Substrate is bound by residues asparagine 192, methionine 221, tyrosine 250, histidine 286, 306–308, 347–350, and glutamate 386; these read SRG and DGLR. Histidine 390 is a binding site for Zn(2+). Tyrosine 413 serves as a coordination point for substrate. Histidine 454 contacts Zn(2+). Residues cysteine 534, cysteine 537, and cysteine 542 each contribute to the [4Fe-4S] cluster site.

The protein belongs to the ThiC family. [4Fe-4S] cluster serves as cofactor.

It carries out the reaction 5-amino-1-(5-phospho-beta-D-ribosyl)imidazole + S-adenosyl-L-methionine = 4-amino-2-methyl-5-(phosphooxymethyl)pyrimidine + CO + 5'-deoxyadenosine + formate + L-methionine + 3 H(+). The protein operates within cofactor biosynthesis; thiamine diphosphate biosynthesis. Functionally, catalyzes the synthesis of the hydroxymethylpyrimidine phosphate (HMP-P) moiety of thiamine from aminoimidazole ribotide (AIR) in a radical S-adenosyl-L-methionine (SAM)-dependent reaction. This is Phosphomethylpyrimidine synthase from Corynebacterium diphtheriae (strain ATCC 700971 / NCTC 13129 / Biotype gravis).